The following is a 58-amino-acid chain: Potassium channel toxin alpha-KTx BmKcug1a (58 aa).

The N-terminal stretch at 1 to 21 (MKISFLLLLAIVICSIGWTEA) is a signal peptide. The residue at position 22 (Q22) is a Pyrrolidone carboxylic acid. Disulfide bonds link C28-C49, C34-C54, and C38-C56.

It belongs to the short scorpion toxin superfamily. Potassium channel inhibitor family. Alpha-KTx 01 subfamily. Expressed by the venom gland.

The protein resides in the secreted. Its function is as follows. Potent blocker of both large-conductance calcium-activated potassium channels (KCa1.1/KCNMA1) and voltage-gated potassium channels (Kv1.3/KCNA3 and ERG1/Kv11.1/KCNH2). This is Potassium channel toxin alpha-KTx BmKcug1a from Olivierus martensii (Manchurian scorpion).